Here is a 200-residue protein sequence, read N- to C-terminus: UPF0301 protein BruAb1_0502 (200 aa).

It belongs to the UPF0301 (AlgH) family.

In Brucella abortus biovar 1 (strain 9-941), this protein is UPF0301 protein BruAb1_0502.